Consider the following 38-residue polypeptide: Large ribosomal subunit protein bL36 (38 aa).

The protein belongs to the bacterial ribosomal protein bL36 family.

The polypeptide is Large ribosomal subunit protein bL36 (Azotobacter vinelandii (strain DJ / ATCC BAA-1303)).